Consider the following 539-residue polypeptide: Glucose-6-phosphate isomerase (539 aa).

Catalysis depends on Glu-349, which acts as the Proton donor. Catalysis depends on residues His-380 and Lys-508.

The protein belongs to the GPI family.

It is found in the cytoplasm. The enzyme catalyses alpha-D-glucose 6-phosphate = beta-D-fructose 6-phosphate. It functions in the pathway carbohydrate biosynthesis; gluconeogenesis. Its pathway is carbohydrate degradation; glycolysis; D-glyceraldehyde 3-phosphate and glycerone phosphate from D-glucose: step 2/4. Its function is as follows. Catalyzes the reversible isomerization of glucose-6-phosphate to fructose-6-phosphate. The polypeptide is Glucose-6-phosphate isomerase (Caulobacter sp. (strain K31)).